The sequence spans 2225 residues: Multifunctional protein pyr1-3 (2225 aa).

Met-1 carries the N-acetylmethionine modification. Residues 40-390 (MVGYNESISD…NVCGEQQHKS (351 aa)) are GATase (Glutamine amidotransferase). L-glutamine contacts are provided by Ser-51, Gly-245, and Gly-247. The Glutamine amidotransferase type-1 domain occupies 196 to 388 (KVIVLDCGIK…VDNVCGEQQH (193 aa)). The Nucleophile; for GATase activity role is filled by Cys-275. Gln-279, Asn-317, Gly-319, and Phe-320 together coordinate L-glutamine. Active-site for GATase activity residues include His-361 and Glu-363. The interval 391–405 (PMNKSKIIDCPKGIN) is linker. Residues 406-948 (KVLILGSGGL…TNDVNINEKS (543 aa)) form a CPSase A region. The CPSase (Carbamoyl-phosphate synthase) stretch occupies residues 406-1461 (KVLILGSGGL…MKGPMPIENV (1056 aa)). Arg-526, Arg-566, Gly-572, Gly-573, Lys-603, Glu-610, Gly-636, Ile-637, His-638, Gln-679, and Glu-693 together coordinate ATP. ATP-grasp domains follow at residues 530–722 (AEKL…KVAL) and 1069–1260 (SRLL…KIII). Mg(2+)-binding residues include Gln-679, Glu-693, and Asn-695. Mn(2+) contacts are provided by Gln-679, Glu-693, and Asn-695. The interval 949–1461 (YITLGSGSYR…MKGPMPIENV (513 aa)) is CPSase B. ATP contacts are provided by Arg-1105, Lys-1144, Ile-1146, Glu-1151, Gly-1176, Val-1177, His-1178, Ser-1179, Gln-1219, and Glu-1231. 3 residues coordinate Mg(2+): Gln-1219, Glu-1231, and Asn-1233. Residues Gln-1219, Glu-1231, and Asn-1233 each contribute to the Mn(2+) site. One can recognise an MGS-like domain in the interval 1324-1470 (FKAPEKNVLL…VDWRTSNKII (147 aa)). The tract at residues 1463-1797 (WRTSNKIIRL…VRGKVVKVVL (335 aa)) is DHOase (dihydroorotase). His-1479 and His-1481 together coordinate Zn(2+). Positions 1483 and 1513 each coordinate (S)-dihydroorotate. Lys-1564, His-1599, Cys-1622, His-1623, and Glu-1646 together coordinate Zn(2+). N6-carboxylysine is present on Lys-1564. Position 1670 (Arg-1670) interacts with (S)-dihydroorotate. Asp-1695 serves as a coordination point for Zn(2+). The For DHOase activity role is filled by Asp-1695. The (S)-dihydroorotate site is built by His-1699 and Pro-1711. Residues 1798-1916 (RGQIAFIDGK…DTLQTAFNIS (119 aa)) are linker. Residues 1917–2225 (DNSLAGKHIF…LLALVFGAGV (309 aa)) are ATCase (Aspartate transcarbamylase). The carbamoyl phosphate site is built by Arg-1974 and Thr-1975. An L-aspartate-binding site is contributed by Lys-2002. Residues Arg-2023, His-2051, and Gln-2054 each contribute to the carbamoyl phosphate site. The L-aspartate site is built by Arg-2084 and Arg-2145. Leu-2184 and Pro-2185 together coordinate carbamoyl phosphate.

In the N-terminal section; belongs to the CarA family. This sequence in the 2nd section; belongs to the CarB family. It in the 3rd section; belongs to the metallo-dependent hydrolases superfamily. DHOase family. CAD subfamily. The protein in the C-terminal section; belongs to the aspartate/ornithine carbamoyltransferase superfamily. ATCase family. As to quaternary structure, homohexamer. Mg(2+) is required as a cofactor. Requires Mn(2+) as cofactor. Zn(2+) serves as cofactor.

Its subcellular location is the cytoplasm. The enzyme catalyses hydrogencarbonate + L-glutamine + 2 ATP + H2O = carbamoyl phosphate + L-glutamate + 2 ADP + phosphate + 2 H(+). It catalyses the reaction L-glutamine + H2O = L-glutamate + NH4(+). The catalysed reaction is hydrogencarbonate + NH4(+) + 2 ATP = carbamoyl phosphate + 2 ADP + phosphate + 2 H(+). It carries out the reaction carbamoyl phosphate + L-aspartate = N-carbamoyl-L-aspartate + phosphate + H(+). The enzyme catalyses (S)-dihydroorotate + H2O = N-carbamoyl-L-aspartate + H(+). It participates in pyrimidine metabolism; UMP biosynthesis via de novo pathway; (S)-dihydroorotate from bicarbonate: step 1/3. It functions in the pathway pyrimidine metabolism; UMP biosynthesis via de novo pathway; (S)-dihydroorotate from bicarbonate: step 2/3. The protein operates within pyrimidine metabolism; UMP biosynthesis via de novo pathway; (S)-dihydroorotate from bicarbonate: step 3/3. Allosterically regulated and controlled by phosphorylation. 5-phosphoribose 1-diphosphate is an activator while UMP is an inhibitor of the CPSase reaction. Functionally, multifunctional protein that encodes the first 3 enzymatic activities of the de novo pyrimidine pathway: carbamoylphosphate synthetase (CPSase; EC 6.3.5.5), aspartate transcarbamylase (ATCase; EC 2.1.3.2) and dihydroorotase (DHOase; EC 3.5.2.3). The CPSase-function is accomplished in 2 steps, by a glutamine-dependent amidotransferase activity (GATase) that binds and cleaves glutamine to produce ammonia, followed by an ammonium-dependent carbamoyl phosphate synthetase, which reacts with the ammonia, hydrogencarbonate and ATP to form carbamoyl phosphate. The endogenously produced carbamoyl phosphate is sequestered and channeled to the ATCase active site. ATCase then catalyzes the formation of carbamoyl-L-aspartate from L-aspartate and carbamoyl phosphate. In the last step, DHOase catalyzes the cyclization of carbamoyl aspartate to dihydroorotate. The sequence is that of Multifunctional protein pyr1-3 (pyr1-3) from Dictyostelium discoideum (Social amoeba).